Here is a 397-residue protein sequence, read N- to C-terminus: Decapping and exoribonuclease protein (397 aa).

Residues Arg-58, Glu-101, and 131 to 133 (WRG) contribute to the substrate site. A Mg(2+)-binding site is contributed by Glu-192. Residues Cys-217 and Glu-234 each contribute to the substrate site. The Mg(2+) site is built by Glu-234, Asp-236, Glu-253, and Leu-254. Lys-255 and Gln-280 together coordinate substrate. Thr-392 carries the post-translational modification Phosphothreonine. Phosphoserine is present on Ser-394.

This sequence belongs to the DXO/Dom3Z family. Mg(2+) is required as a cofactor.

The protein resides in the nucleus. It catalyses the reaction a 5'-end triphospho-ribonucleoside in mRNA + H2O = a 5'-end phospho-ribonucleoside in mRNA + diphosphate + H(+). The catalysed reaction is a 5'-end NAD(+)-phospho-ribonucleoside in mRNA + H2O = a 5'-end phospho-ribonucleoside in mRNA + NAD(+) + H(+). It carries out the reaction a 5'-end NAD(+)-phospho-ribonucleoside in snoRNA + H2O = a 5'-end phospho-ribonucleoside in snoRNA + NAD(+) + H(+). The enzyme catalyses a 5'-end (N(7)-methyl 5'-triphosphoguanosine)-ribonucleoside-ribonucleotide in mRNA + H2O = a (N(7)-methyl 5'-triphosphoguanosine)-nucleoside + a 5'-end phospho-ribonucleoside in mRNA + H(+). It catalyses the reaction a 5'-end FAD-phospho-ribonucleoside in mRNA + H2O = a 5'-end phospho-ribonucleoside in mRNA + FAD + H(+). The catalysed reaction is a 5'-end CoA-ribonucleoside in mRNA + H2O = 3'-dephospho-CoA + a 5'-end phospho-ribonucleoside in mRNA + H(+). Decapping enzyme for NAD-capped RNAs: specifically hydrolyzes the nicotinamide adenine dinucleotide (NAD) cap from a subset of RNAs by removing the entire NAD moiety from the 5'-end of an NAD-capped RNA. The NAD-cap is present at the 5'-end of some RNAs and snoRNAs. In contrast to the canonical 5'-end N7 methylguanosine (m7G) cap, the NAD cap promotes mRNA decay. Preferentially acts on NAD-capped transcripts in response to environmental stress. Also acts as a non-canonical decapping enzyme that removes the entire cap structure of m7G capped or incompletely capped RNAs and mediates their subsequent degradation. Specifically degrades pre-mRNAs with a defective 5'-end m7G cap and is part of a pre-mRNA capping quality control. Has decapping activity toward incomplete 5'-end m7G cap mRNAs such as unmethylated 5'-end-capped RNA (cap0), while it has no activity toward 2'-O-ribose methylated m7G cap (cap1). In contrast to canonical decapping enzymes DCP2 and NUDT16, which cleave the cap within the triphosphate linkage, the decapping activity releases the entire cap structure GpppN and a 5'-end monophosphate RNA. Also has 5'-3' exoribonuclease activities: The 5'-end monophosphate RNA is then degraded by the 5'-3' exoribonuclease activity, enabling this enzyme to decap and degrade incompletely capped mRNAs. Also possesses RNA 5'-pyrophosphohydrolase activity by hydrolyzing the 5'-end triphosphate to release pyrophosphates. Exhibits decapping activity towards FAD-capped RNAs. Exhibits decapping activity towards dpCoA-capped RNAs in vitro. The polypeptide is Decapping and exoribonuclease protein (Rattus norvegicus (Rat)).